A 594-amino-acid polypeptide reads, in one-letter code: Potassium-transporting ATPase potassium-binding subunit (594 aa).

The next 10 membrane-spanning stretches (helical) occupy residues 3–23 (ADFL…APLL), 67–87 (AVAM…LQRL), 136–156 (ALTV…IALV), 179–199 (LYVL…QGVV), 287–307 (LEML…GEMV), 314–334 (VAIL…AAYF), 415–435 (GLYG…LMIG), 453–473 (VALV…VAVL), 519–539 (VLLG…ILAL), and 562–582 (LFVA…YVPA).

It belongs to the KdpA family. The system is composed of three essential subunits: KdpA, KdpB and KdpC.

The protein localises to the cell inner membrane. Its function is as follows. Part of the high-affinity ATP-driven potassium transport (or Kdp) system, which catalyzes the hydrolysis of ATP coupled with the electrogenic transport of potassium into the cytoplasm. This subunit binds the periplasmic potassium ions and delivers the ions to the membrane domain of KdpB through an intramembrane tunnel. This Bordetella bronchiseptica (strain ATCC BAA-588 / NCTC 13252 / RB50) (Alcaligenes bronchisepticus) protein is Potassium-transporting ATPase potassium-binding subunit.